We begin with the raw amino-acid sequence, 264 residues long: Iodotyrosine deiodinase (264 aa).

FMN contacts are provided by residues 75-79 (RRTVR) and 103-104 (SG). Residues A105, E132, Y136, and K157 each contribute to the 3-iodo-L-tyrosine site. FMN-binding positions include 212-214 (TST) and R254.

This sequence belongs to the nitroreductase family. The cofactor is FMN.

The catalysed reaction is 2 iodide + L-tyrosine + 2 NADP(+) = 3,5-diiodo-L-tyrosine + 2 NADPH + H(+). It catalyses the reaction iodide + L-tyrosine + NADP(+) = 3-iodo-L-tyrosine + NADPH. The enzyme catalyses 3-iodo-L-tyrosine + iodide + NADP(+) = 3,5-diiodo-L-tyrosine + NADPH + H(+). It carries out the reaction L-tyrosine + chloride + NADP(+) = 3-chloro-L-tyrosine + NADPH. The catalysed reaction is bromide + L-tyrosine + NADP(+) = 3-bromo-L-tyrosine + NADPH. Its function is as follows. Catalyzes the dehalogenation of halotyrosines such as 3,5-diiodo-L-tyrosine. Likely to also catalyze the dehalogenation of other halotyrosines such as 3-bromo-L-tyrosine, 3-chloro-L-tyrosine and 3-iodo-L-tyrosine. The protein is Iodotyrosine deiodinase of Nematostella vectensis (Starlet sea anemone).